The chain runs to 396 residues: Phosphoglycerate kinase (396 aa).

Residues 21–23 (DFN), R36, 59–62 (HLGR), R118, and R151 each bind substrate. Residues K201, G292, E323, and 349 to 352 (GGDS) contribute to the ATP site.

The protein belongs to the phosphoglycerate kinase family. In terms of assembly, monomer.

The protein resides in the cytoplasm. It catalyses the reaction (2R)-3-phosphoglycerate + ATP = (2R)-3-phospho-glyceroyl phosphate + ADP. The protein operates within carbohydrate degradation; glycolysis; pyruvate from D-glyceraldehyde 3-phosphate: step 2/5. The sequence is that of Phosphoglycerate kinase from Leptospira biflexa serovar Patoc (strain Patoc 1 / Ames).